A 379-amino-acid chain; its full sequence is Leukocyte elastase inhibitor A (379 aa).

Ser-300 carries the post-translational modification Phosphoserine. The CARD-binding motif (CBM) stretch occupies residues 351–379 (EFTVDHPFIFFIRHNPTSNVLFLGRVCSP).

Belongs to the serpin family. Ov-serpin subfamily. Monomer. Interacts (via C-terminus) with CASP1 and CASP4 (via CARD domain); these interactions regulate the activity of inflammatory caspases. In terms of tissue distribution, ubiquitous with higher expression in pancreas, spleen and bone marrow.

The protein resides in the secreted. It is found in the cytoplasm. It localises to the cytolytic granule. Its subcellular location is the early endosome. Functionally, neutrophil serine protease inhibitor that plays an essential role in the regulation of the innate immune response, inflammation and cellular homeostasis. Acts primarily to protect the cell from proteases released in the cytoplasm during stress or infection. These proteases are important in killing microbes but when released from granules, these potent enzymes also destroy host proteins and contribute to mortality. Regulates the activity of the neutrophil proteases elastase, cathepsin G, proteinase-3, chymase, chymotrypsin, and kallikrein-3. Also acts as a potent intracellular inhibitor of granzyme H. During inflammation, limits the activity of inflammatory caspases CASP1 and CASP4 by suppressing their caspase-recruitment domain (CARD) oligomerization and enzymatic activation. In addition, promotes the proliferation of beta-cells when secreted. This Mus musculus (Mouse) protein is Leukocyte elastase inhibitor A (Serpinb1a).